A 506-amino-acid polypeptide reads, in one-letter code: Maturase K (506 aa).

Belongs to the intron maturase 2 family. MatK subfamily.

It is found in the plastid. Its subcellular location is the chloroplast. Usually encoded in the trnK tRNA gene intron. Probably assists in splicing its own and other chloroplast group II introns. This is Maturase K from Trifolium hybridum (Alsike clover).